A 256-amino-acid polypeptide reads, in one-letter code: Thiazole synthase (256 aa).

Residue Lys96 is the Schiff-base intermediate with DXP of the active site. 1-deoxy-D-xylulose 5-phosphate contacts are provided by residues Gly157, 183–184, and 205–206; these read AG and NT.

The protein belongs to the ThiG family. In terms of assembly, homotetramer. Forms heterodimers with either ThiH or ThiS.

Its subcellular location is the cytoplasm. It catalyses the reaction [ThiS sulfur-carrier protein]-C-terminal-Gly-aminoethanethioate + 2-iminoacetate + 1-deoxy-D-xylulose 5-phosphate = [ThiS sulfur-carrier protein]-C-terminal Gly-Gly + 2-[(2R,5Z)-2-carboxy-4-methylthiazol-5(2H)-ylidene]ethyl phosphate + 2 H2O + H(+). It functions in the pathway cofactor biosynthesis; thiamine diphosphate biosynthesis. Catalyzes the rearrangement of 1-deoxy-D-xylulose 5-phosphate (DXP) to produce the thiazole phosphate moiety of thiamine. Sulfur is provided by the thiocarboxylate moiety of the carrier protein ThiS. In vitro, sulfur can be provided by H(2)S. This chain is Thiazole synthase, found in Bacillus cereus (strain ATCC 10987 / NRS 248).